Reading from the N-terminus, the 177-residue chain is Alkyl hydroperoxide reductase AhpD (177 aa).

Cys130 serves as the catalytic Proton donor. An intrachain disulfide couples Cys130 to Cys133. Cys133 functions as the Cysteine sulfenic acid (-SOH) intermediate in the catalytic mechanism.

This sequence belongs to the AhpD family. Homotrimer.

The enzyme catalyses N(6)-[(R)-dihydrolipoyl]-L-lysyl-[lipoyl-carrier protein] + a hydroperoxide = N(6)-[(R)-lipoyl]-L-lysyl-[lipoyl-carrier protein] + an alcohol + H2O. Functionally, antioxidant protein with alkyl hydroperoxidase activity. Required for the reduction of the AhpC active site cysteine residues and for the regeneration of the AhpC enzyme activity. This chain is Alkyl hydroperoxide reductase AhpD, found in Mycolicibacterium smegmatis (strain ATCC 700084 / mc(2)155) (Mycobacterium smegmatis).